The primary structure comprises 1158 residues: Transient receptor potential cation channel subfamily M member 5 (1158 aa).

The Cytoplasmic portion of the chain corresponds to 1–729 (MQTTQSSCPG…LTRWRKFWGA (729 aa)). Ser129 is modified (phosphoserine; by PKC). Ca(2+)-binding residues include Cys341, Asp350, Asp353, and Glu354. Residues 488–507 (GRRMEERGPPKRPAGQKWLP) form a disordered region. A coiled-coil region spans residues 552-572 (KIIKEMSHLEKEAEVARTMRE). Residues 730–754 (PVTVFLGNVVMYFAFLFLFTYVLLV) form a helical membrane-spanning segment. Over 755-764 (DFRPPPQGPS) the chain is Extracellular. Residues 765–784 (GSEVTLYFWVFTLVLEEIRQ) form a helical membrane-spanning segment. Glu781 and Gln784 together coordinate Ca(2+). The Cytoplasmic segment spans residues 785 to 805 (GFFTDEDTHLVKKFTLYVEDN). A helical transmembrane segment spans residues 806 to 824 (WNKCDMVAIFLFIVGVTCR). Ca(2+) is bound by residues Asn807 and Asp810. The Extracellular segment spans residues 825 to 831 (MVPSVFE). The chain crosses the membrane as a helical span at residues 832–854 (AGRTVLAIDFMVFTLRLIHIFAI). Residues 855–863 (HKQLGPKII) are Cytoplasmic-facing. The chain crosses the membrane as a helical span at residues 864-893 (IVERMMKDVFFFLFFLSVWLVAYGVTTQAL). Topologically, residues 894–902 (LHPHDGRLE) are extracellular. The pore-forming intramembrane region spans 903-938 (WIFRRVLYRPYLQIFGQIPLDEIDEARVNCSLHPLL). The short motif at 917–919 (FGQ) is the Selectivity filter element. Residues 939-950 (LESSASCPNLYA) lie on the Extracellular side of the membrane. Residues 951–985 (NWLVILLLVTFLLVTNVLLMNLLIAMFSYTFQVVQ) traverse the membrane as a helical segment. Residues 986–1158 (GNADMFWKFQ…LESGLPPSDT (173 aa)) lie on the Cytoplasmic side of the membrane. Residue Glu1002 participates in Ca(2+) binding. Over residues 1127–1141 (TYSSSQNCGCRSQPA) the composition is skewed to polar residues. The segment at 1127–1158 (TYSSSQNCGCRSQPASARDREYLESGLPPSDT) is disordered.

This sequence belongs to the transient receptor (TC 1.A.4) family. LTrpC subfamily. TRPM5 sub-subfamily. Homotetramer. Multiple phosphorylation sites regulate the Gq/ TRPM5 modulation axis, with the Ser-129 playing a substantial role in this positive modulation. In terms of tissue distribution, strongly expressed in liver, heart, testis, brain and kidney. Detected in fetal liver, kidney, spleen, brain, heart and lung, and in adult skin, eyes, spleen, stomach, small intestine, colon, lung, bladder, pancreas and thymus. Biallelically expressed at all stages and tissues examined. Also expressed in subsets of taste receptor cells of the tongue, in olfactory sensory neurons of the main olfactory epithelium and in the vomeronasal organ.

The protein localises to the cell membrane. It carries out the reaction Na(+)(in) = Na(+)(out). It catalyses the reaction K(+)(in) = K(+)(out). Its activity is regulated as follows. Ca(2+)-activated cation channel. Displays voltage dependence modulation. Regulated by PI(4,5)P2 levels. PI(4,5)P 2 reverses the Ca(2+) -induced desensitization of channels. Inhibited by flufenamic acid with an IC(50) of 24.5 uM and spermine with an IC(50) of 37 uM. Is a highly temperature-sensitive, heat activated channel showing a steep increase of inward currents at temperatures between 15 and 35 degrees Celsius. Heat activation is due to a shift of the voltage-dependent activation curve to negative potentials. The channel is blocked by extracellular acidification. Functionally, monovalent cation-selective ion channel activated by intracellular Ca(2+) in a voltage- and temperature-dependent manner. Mediates the transport of Na(+), K(+) and Cs(+) ions equally well. Activated directly by increase in intracellular Ca(2+), but is impermeable to it. The activation mechanism of TRPM5 involves a multistep process. TRPM5 activation involves ligand binding (i.e., tastant molecule, glucose stimulation) to Gq/G-protein coupled receptors (GPCR) and leads to the breakdown of phosphatidylinositol bisphosphate (PIP2) into diacylglycerol (DAG) and inositol trisphosphate (IP3), IP3 binds to its receptors in the endoplasmic reticulum and cause Ca(2+) release. Simultaneously with the intracellular Ca(2+) release, DAG activates the protein kinase C (PKC), which phosphorylates the TRPM5 channel. This phosphorylation combined with the bound Ca(2+), leads to a robust inward current allowing the entry of sodium ions (Na+) into the cell. This ion influx depolarizes the cell membrane, generating action potentials that propagate TRPM5 signals. Is a key player in sensing sweet, umami and bitter stimuli. May also be involved in sensing semiochemicals. Involved in insulin secretion by pancreatic beta cells. This chain is Transient receptor potential cation channel subfamily M member 5, found in Mus musculus (Mouse).